A 1090-amino-acid chain; its full sequence is Neurofilament heavy polypeptide (1090 aa).

Positions 2–98 are head; the sequence is MSFGSADALL…AVAARSEKEQ (97 aa). Residues serine 74 and serine 122 each carry the phosphoserine modification. One can recognise an IF rod domain in the interval 95 to 411; sequence EKEQLQALND…KLLEGEECRI (317 aa). Residues 99–130 form a coil 1A region; the sequence is LQALNDRFAGYIDKVRQLEAHNRSLEGEAAAL. Residues 131–143 form a linker 1 region; it reads RQQQAGRAAMGEL. The tract at residues 144 to 242 is coil 1B; sequence YEREVREMRG…QEEVGELLGQ (99 aa). The tract at residues 243 to 264 is linker 12; sequence IQGCGAAQAQAQAEARDALKCD. The interval 265 to 286 is coil 2A; the sequence is VTSALREIRAQLEGHAVQSTLQ. The interval 287–290 is linker 2; that stretch reads SEEW. Residues 291–411 form a coil 2B region; it reads FRVRLDRLSE…KLLEGEECRI (121 aa). 3 positions are modified to phosphoserine: serine 345, serine 416, and serine 419. The tract at residues 412-1090 is tail; it reads GFGPSPFSLT…TEDKATKGEK (679 aa). The interval 456 to 1090 is disordered; the sequence is EGQTEEIRVT…TEDKATKGEK (635 aa). The span at 468–495 shows a compositional bias: acidic residues; it reads VTEEEDKEAQGQEGEEAEEGEEKEEEEG. The span at 496–506 shows a compositional bias: low complexity; the sequence is AAATSPPAEEA. Serine 508, serine 523, serine 529, serine 535, serine 541, serine 547, serine 553, serine 559, serine 565, serine 571, serine 577, serine 583, serine 589, serine 595, serine 601, serine 607, serine 613, serine 619, serine 625, serine 631, serine 637, serine 643, serine 649, serine 655, serine 661, serine 667, serine 673, serine 679, serine 685, serine 691, serine 697, serine 703, serine 709, serine 715, serine 721, serine 727, serine 733, serine 739, serine 745, serine 751, serine 757, serine 763, and serine 769 each carry phosphoserine. Residues 508-579 are compositionally biased toward basic and acidic residues; it reads SPEKETKSRV…KSPAEAKSPA (72 aa). A run of 42 repeats spans residues 522–527, 528–533, 534–539, 540–545, 546–551, 552–557, 558–563, 564–569, 570–575, 576–581, 582–587, 588–593, 594–599, 600–605, 606–611, 612–617, 618–623, 624–629, 630–635, 636–641, 642–647, 648–653, 654–659, 660–665, 666–671, 672–677, 678–683, 684–689, 690–695, 696–701, 702–707, 708–713, 714–719, 720–725, 726–731, 732–737, 738–743, 744–749, 750–755, 756–761, 762–767, and 768–773. The interval 522–892 is 52 X 6 AA approximate tandem repeats of K-S-P-[AGISV]-[EATK]-[APVQ]; it reads KSPGEAKSPG…KEEVKSPVKE (371 aa). Residues 595–633 show a composition bias toward basic and acidic residues; that stretch reads SPSEAKSPAEAKSPAEAKSPAEAKSPAEAKSPAEAKSPA. Residues 649–717 are compositionally biased toward basic and acidic residues; the sequence is SPSEAKSPAE…KSPAEVKSPG (69 aa). Basic and acidic residues predominate over residues 745–781; sequence SPGEAKSPAEAKSPAEAKSPIEVKSPEKAKTPVKEGA. The stretch at 774–779 is one 43; approximate repeat; it reads KTPVKE. 6 repeat units span residues 782-787, 788-793, 794-799, 808-813, 814-819, and 833-838. Serine 783, serine 789, serine 795, serine 809, serine 815, and serine 834 each carry phosphoserine. A compositionally biased stretch (basic and acidic residues) spans 788-834; the sequence is KSPEKAKSPVKEDIKPPAEAKSPEKAKSPVKEGAKPPEKAKPLDVKS. At threonine 839 the chain carries Phosphothreonine. Composition is skewed to basic and acidic residues over residues 843–964 and 974–1090; these read EEAK…KAVA and GVKE…KGEK. 3 repeat units span residues 858–863, 866–871, and 887–892. 4 positions are modified to phosphoserine: serine 859, serine 867, serine 888, and serine 947.

Belongs to the intermediate filament family. As to quaternary structure, forms heterodimers with NEFL; which can further hetero-oligomerize (in vitro). Forms heterodimers with INA (in vitro). There are a number of repeats of the tripeptide K-S-P, NFH is phosphorylated on a number of the serines in this motif. It is thought that phosphorylation of NFH results in the formation of interfilament cross bridges that are important in the maintenance of axonal caliber. In terms of processing, phosphorylation seems to play a major role in the functioning of the larger neurofilament polypeptides (NF-M and NF-H), the levels of phosphorylation being altered developmentally and coincidentally with a change in the neurofilament function. Post-translationally, phosphorylated in the head and rod regions by the PKC kinase PKN1, leading to the inhibition of polymerization. Expressed in the sciatic nerve (at protein level).

It is found in the cytoplasm. It localises to the cytoskeleton. The protein localises to the cell projection. The protein resides in the axon. Functionally, neurofilaments usually contain three intermediate filament proteins: NEFL, NEFM, and NEFH which are involved in the maintenance of neuronal caliber. NEFH has an important function in mature axons that is not subserved by the two smaller NF proteins. May additionally cooperate with the neuronal intermediate filament proteins PRPH and INA to form neuronal filamentous networks. This Mus musculus (Mouse) protein is Neurofilament heavy polypeptide (Nefh).